Consider the following 376-residue polypeptide: MLDLIQTRRDLHQIPEIGLEEFKTQAYLLDVIEKLTTGKDFVQIRTWRTGILVYLQGSQPERTIGWRTDIDGLPIVEQTGLPFASQHQGRMHACVHDFHMTIALGCLERALEEQPKNNLLFLFQPAEENEAGGMLMYEDGAFGDWLPDQFYGLHVRPDLKVGQIATNTHTLFAGTCEVKIRFKGKGGHAAFPHEANDALVAASYFVTQVQSVVSRNVNPIEGAVVTFGVFQAGTTNNVITDTAFLHGTIRALTQDMSLLVQKRVKTVAEGVAAAFDMEVEVELKQGGYLPVENNPALARELMDFFDEKDGIELIDIEPAMTGEDFGYLLSKVDGVMFWLGIDSPYALHHPQMSPKEEVLAIGVAAVSSFLKKKAAE.

Residue Asp-69 is part of the active site. Glu-128 acts as the Proton acceptor in catalysis.

It belongs to the peptidase M20A family. N-acetyldiaminopimelate deacetylase subfamily.

The catalysed reaction is N-acetyl-(2S,6S)-2,6-diaminopimelate + H2O = (2S,6S)-2,6-diaminopimelate + acetate. It participates in amino-acid biosynthesis; L-lysine biosynthesis via DAP pathway; LL-2,6-diaminopimelate from (S)-tetrahydrodipicolinate (acetylase route): step 3/3. Its function is as follows. Catalyzes the conversion of N-acetyl-diaminopimelate to diaminopimelate and acetate. The sequence is that of N-acetyldiaminopimelate deacetylase from Streptococcus pneumoniae serotype 4 (strain ATCC BAA-334 / TIGR4).